The chain runs to 886 residues: CRM-domain containing factor CFM3, chloroplastic/mitochondrial (886 aa).

The N-terminal 70 residues, 1–70 (MAAAAMAISP…LDLRPEPSPS (70 aa)), are a transit peptide targeting the chloroplast and mitochondrion. Disordered stretches follow at residues 56-84 (RPASALDLRPEPSPSSDSDDDAAFGTSRS) and 269-291 (TKGTSKNTQTLGMKSSIKEPPGH). CRM domains follow at residues 174–270 (LTLP…EPTK), 378–475 (PSLS…ELAE), and 590–690 (ETIT…SKLR). Residues 270–281 (KGTSKNTQTLGM) show a composition bias toward polar residues. The tract at residues 771-886 (SFDNSVAVQN…QSTELTNTCS (116 aa)) is disordered. Positions 793-827 (NSDDEGDYSDEDDDEDDDNDEEDGFDYENDDEDDV) are enriched in acidic residues. Composition is skewed to polar residues over residues 841 to 852 (DFGSSDSENYVS) and 869 to 886 (DSRNSYSEQSTELTNTCS).

Interacts with RNA. Part of large ribonucleo-protein particles that contain CAF1 and/or CAF2, and RNC1.

It localises to the plastid. Its subcellular location is the chloroplast. The protein resides in the mitochondrion. Its function is as follows. Binds specific group II introns in chloroplasts and facilitates their splicing. Acts on subgroup IIB introns. The substrates of the subgroup IIB also require the CRM domain proteins CAF1 or CAF2, with a simultaneous binding of CFM3 and CAF1 or CAF2. May influence the biogenesis of the mitochondrial small ribosomal subunit. This chain is CRM-domain containing factor CFM3, chloroplastic/mitochondrial, found in Oryza sativa subsp. japonica (Rice).